Reading from the N-terminus, the 328-residue chain is DNA polymerase III subunit delta' (328 aa).

In terms of assembly, DNA polymerase III contains a core (composed of alpha, epsilon and theta chains) that associates with a tau subunit. This core dimerizes to form the POLIII' complex. PolIII' associates with the gamma complex (composed of gamma, delta, delta', psi and chi chains) and with the beta chain to form the complete DNA polymerase III complex.

The enzyme catalyses DNA(n) + a 2'-deoxyribonucleoside 5'-triphosphate = DNA(n+1) + diphosphate. Its function is as follows. DNA polymerase III is a complex, multichain enzyme responsible for most of the replicative synthesis in bacteria. This DNA polymerase also exhibits 3' to 5' exonuclease activity. This is DNA polymerase III subunit delta' (holB) from Buchnera aphidicola subsp. Schizaphis graminum (strain Sg).